Here is a 473-residue protein sequence, read N- to C-terminus: Photosystem II CP43 reaction center protein (473 aa).

A propeptide spanning residues 1–14 (MKTLYSLRRYFHVE) is cleaved from the precursor. The residue at position 15 (T15) is an N-acetylthreonine. Position 15 is a phosphothreonine (T15). Transmembrane regions (helical) follow at residues 69–93 (LFEVAHFVPEKPMYEQGLILLPHLA), 134–155 (LIGPETLEESYPFFGYLWKDKN), 178–200 (KAMYFGGVYDTWAPGGGDVRVIS), 255–275 (KPFAWARRAFVWSGEAYLSYS), and 291–312 (WFNNTVYPSEFFGPTGPEASQA). Position 367 (E367) interacts with [CaMn4O5] cluster. Residues 447–471 (RARAAAAGFEKGIDRDTEPVLSMRP) form a helical membrane-spanning segment.

The protein belongs to the PsbB/PsbC family. PsbC subfamily. PSII is composed of 1 copy each of membrane proteins PsbA, PsbB, PsbC, PsbD, PsbE, PsbF, PsbH, PsbI, PsbJ, PsbK, PsbL, PsbM, PsbT, PsbX, PsbY, PsbZ, Psb30/Ycf12, at least 3 peripheral proteins of the oxygen-evolving complex and a large number of cofactors. It forms dimeric complexes. Requires Binds multiple chlorophylls and provides some of the ligands for the Ca-4Mn-5O cluster of the oxygen-evolving complex. It may also provide a ligand for a Cl- that is required for oxygen evolution. PSII binds additional chlorophylls, carotenoids and specific lipids. as cofactor.

The protein localises to the plastid. It localises to the chloroplast thylakoid membrane. Its function is as follows. One of the components of the core complex of photosystem II (PSII). It binds chlorophyll and helps catalyze the primary light-induced photochemical processes of PSII. PSII is a light-driven water:plastoquinone oxidoreductase, using light energy to abstract electrons from H(2)O, generating O(2) and a proton gradient subsequently used for ATP formation. In Ostreococcus tauri, this protein is Photosystem II CP43 reaction center protein.